Reading from the N-terminus, the 393-residue chain is uncharacterized protein (393 aa).

[4Fe-4S] cluster contacts are provided by cysteine 9, cysteine 15, cysteine 18, and cysteine 97. Positions 231, 258, 279, and 325 each coordinate S-adenosyl-L-methionine. The active-site Nucleophile is the cysteine 352.

This sequence belongs to the class I-like SAM-binding methyltransferase superfamily. RNA M5U methyltransferase family.

This is an uncharacterized protein from Leptospira interrogans serogroup Icterohaemorrhagiae serovar Lai (strain 56601).